The chain runs to 268 residues: Zwei Ig domain protein zig-8 (268 aa).

An N-terminal signal peptide occupies residues 1–21 (MRRFSNICVILFSFLYATGHG). Ig-like C2-type domains are found at residues 40–128 (PSQT…NTVY) and 140–251 (PSPS…NSAT). A disulfide bridge connects residues cysteine 57 and cysteine 118. Asparagine 82, asparagine 155, asparagine 164, and asparagine 191 each carry an N-linked (GlcNAc...) asparagine glycan. An intrachain disulfide couples cysteine 165 to cysteine 226.

As to expression, expressed in PVT neurons and pharyngeal muscles.

It is found in the secreted. In terms of biological role, together with zig-5, required postembryonically to maintain the position of ASI and ASH head neuron cell bodies and ventral nerve cord axons of PVQ, PVP and HSN neurons by preventing their displacement that could occur during body growth and movement. May act by reducing L1CAM-like protein sax-7 (long isoform) adhesion. In Caenorhabditis elegans, this protein is Zwei Ig domain protein zig-8.